The primary structure comprises 156 residues: dCTP deaminase (156 aa).

DCTP is bound by residues 79–84, aspartate 95, glutamine 124, and tyrosine 138; that span reads RSSLAR.

This sequence belongs to the dCTP deaminase family. Homotrimer.

The catalysed reaction is dCTP + H2O + H(+) = dUTP + NH4(+). It functions in the pathway pyrimidine metabolism; dUMP biosynthesis; dUMP from dCTP (dUTP route): step 1/2. Its function is as follows. Catalyzes the deamination of dCTP to dUTP. This Pyrococcus horikoshii (strain ATCC 700860 / DSM 12428 / JCM 9974 / NBRC 100139 / OT-3) protein is dCTP deaminase.